The following is a 628-amino-acid chain: Vacuolar-sorting receptor 3 (628 aa).

The N-terminal stretch at 1–24 is a signal peptide; it reads MKQLLCYLPWLLLLTLLVSPLNDA. At 25-569 the chain is on the lumenal side; the sequence is RFVVEKNSLS…SKTGAQVRSA (545 aa). Residues 56 to 168 enclose the PA domain; that stretch reads QYGGSMAGTV…GFGEKLKKAI (113 aa). Asn148, Asn294, and Asn434 each carry an N-linked (GlcNAc...) asparagine glycan. 2 consecutive EGF-like domains span residues 416-466 and 469-516; these read ESNE…SHCE and GPGR…KKCE. 7 cysteine pairs are disulfide-bonded: Cys420-Cys438, Cys427-Cys447, Cys449-Cys465, Cys473-Cys493, Cys480-Cys501, Cys503-Cys515, and Cys545-Cys558. Residues 517 to 559 form the EGF-like 3; calcium-binding domain; sequence DINECKEKKACQCPECSCKNTWGSYECSCSGDLLYIRDHDTCI. Residues 570–590 form a helical membrane-spanning segment; the sequence is WAAVWLIMLSLGLAAAGAYLV. Residues 591–628 lie on the Cytoplasmic side of the membrane; that stretch reads YKYRLRQYMDSEIRAIMAQYMPLDSQPEIPNHVNDERA. The Tyrosine-based internalization motif motif lies at 610 to 613; it reads YMPL.

This sequence belongs to the VSR (BP-80) family. As to expression, expressed in seeds, seedlings, roots, leaves, flowers and siliques.

Its subcellular location is the membrane. The protein localises to the golgi apparatus membrane. It localises to the cytoplasmic vesicle. It is found in the clathrin-coated vesicle membrane. The protein resides in the prevacuolar compartment membrane. Vacuolar-sorting receptor (VSR) involved in clathrin-coated vesicles sorting from Golgi apparatus to vacuoles. This chain is Vacuolar-sorting receptor 3 (VSR3), found in Arabidopsis thaliana (Mouse-ear cress).